The following is a 153-amino-acid chain: MWFSRKQAVNVAPKSTAGGAAALPKQVTTKSRGDAAESAARAYLVGAGLRWIESNYRTPGRGGGEIDLVMRVPDGTLVFVEVRQRSSASHGGAGASISAVKQRRIIFAARHYLMRFASLPPCRFDVVLVHGALSGGESPQATIEWLPAAFDAS.

Belongs to the UPF0102 family.

This Polaromonas naphthalenivorans (strain CJ2) protein is UPF0102 protein Pnap_0271.